The chain runs to 382 residues: V-type proton ATPase subunit C 1 (382 aa).

Thr2 carries the N-acetylthreonine modification.

This sequence belongs to the V-ATPase C subunit family. In terms of assembly, V-ATPase is a heteromultimeric enzyme made up of two complexes: the ATP-hydrolytic V1 complex and the proton translocation V0 complex. The V1 complex consists of three catalytic AB heterodimers that form a heterohexamer, three peripheral stalks each consisting of EG heterodimers, one central rotor including subunits D and F, and the regulatory subunits C and H. The proton translocation complex V0 consists of the proton transport subunit a, a ring of proteolipid subunits c9c'', rotary subunit d, subunits e and f, and two accessory subunits.

Subunit of the V1 complex of vacuolar(H+)-ATPase (V-ATPase), a multisubunit enzyme composed of a peripheral complex (V1) that hydrolyzes ATP and a membrane integral complex (V0) that translocates protons. V-ATPase is responsible for acidifying and maintaining the pH of intracellular compartments and in some cell types, is targeted to the plasma membrane, where it is responsible for acidifying the extracellular environment. Subunit C is necessary for the assembly of the catalytic sector of the enzyme and is likely to have a specific function in its catalytic activity. The protein is V-type proton ATPase subunit C 1 (atp6v1c1) of Xenopus laevis (African clawed frog).